A 358-amino-acid polypeptide reads, in one-letter code: NADH-quinone oxidoreductase subunit H (358 aa).

A run of 8 helical transmembrane segments spans residues 20 to 40 (ITVG…IPLI), 95 to 115 (ALFY…WAVI), 128 to 148 (IGLL…IIAG), 168 to 188 (ISYE…SGSM), 206 to 226 (VFSW…ISAV), 253 to 273 (GFAF…IAAL), 295 to 315 (TPSA…YLWI), and 334 to 354 (VLIP…ISPL).

The protein belongs to the complex I subunit 1 family. As to quaternary structure, NDH-1 is composed of 14 different subunits. Subunits NuoA, H, J, K, L, M, N constitute the membrane sector of the complex.

It localises to the cell inner membrane. The catalysed reaction is a quinone + NADH + 5 H(+)(in) = a quinol + NAD(+) + 4 H(+)(out). Its function is as follows. NDH-1 shuttles electrons from NADH, via FMN and iron-sulfur (Fe-S) centers, to quinones in the respiratory chain. The immediate electron acceptor for the enzyme in this species is believed to be ubiquinone. Couples the redox reaction to proton translocation (for every two electrons transferred, four hydrogen ions are translocated across the cytoplasmic membrane), and thus conserves the redox energy in a proton gradient. This subunit may bind ubiquinone. This is NADH-quinone oxidoreductase subunit H from Neisseria meningitidis serogroup B (strain ATCC BAA-335 / MC58).